Reading from the N-terminus, the 180-residue chain is Endoribonuclease YbeY (180 aa).

His118, His122, and His128 together coordinate Zn(2+).

The protein belongs to the endoribonuclease YbeY family. Zn(2+) serves as cofactor.

It is found in the cytoplasm. Functionally, single strand-specific metallo-endoribonuclease involved in late-stage 70S ribosome quality control and in maturation of the 3' terminus of the 16S rRNA. This chain is Endoribonuclease YbeY, found in Rhodococcus erythropolis (strain PR4 / NBRC 100887).